Here is a 188-residue protein sequence, read N- to C-terminus: Deoxycytidylate deaminase (188 aa).

One can recognise a CMP/dCMP-type deaminase domain in the interval 1 to 171 (MKASTVLQIA…DILRNAGIEV (171 aa)). The Zn(2+) site is built by Cys-19, Cys-49, His-94, Glu-102, and His-104. Glu-106 (proton donor) is an active-site residue. Zn(2+) is bound by residues Cys-132 and Cys-135.

The protein belongs to the cytidine and deoxycytidylate deaminase family. As to quaternary structure, homohexamer. It depends on Zn(2+) as a cofactor.

The catalysed reaction is dCMP + H2O + H(+) = dUMP + NH4(+). With respect to regulation, allosteric enzyme whose activity is greatly influenced by the end products of its metabolic pathway, dCTP and dTTP. Functionally, supplies the nucleotide substrate for thymidylate synthetase. This Enterobacteria phage T2 (Bacteriophage T2) protein is Deoxycytidylate deaminase (CD).